The following is a 698-amino-acid chain: PWWP domain-containing DNA repair factor 3A (698 aa).

2 disordered regions span residues 102–145 and 159–386; these read TSLS…EDDQ and CSPK…EEPP. Ser-105 bears the Phosphoserine mark. Positions 129 to 139 are enriched in polar residues; the sequence is SQVSSAPSPSF. Residues Ser-165, Ser-168, and Ser-170 each carry the phosphoserine modification. Polar residues predominate over residues 200 to 211; sequence DESQNGSGSQLD. Composition is skewed to basic and acidic residues over residues 212-235 and 341-350; these read HGQE…RGKA and RAGDSDRPEE. Ser-355 and Ser-356 each carry phosphoserine. Residues 370 to 384 are compositionally biased toward acidic residues; sequence EEEEEEEEEEEEEEE. The 62-residue stretch at 399–460 folds into the PWWP domain; that stretch reads VGMLVWLKYQ…KHFDCKEKHA (62 aa).

Belongs to the PWWP3A family. In terms of assembly, interacts with TP53BP1 (via BRCT domain); the interaction is not dependent on its phosphorylation status. Binds nucleosomes. Interacts with trimethylated 'Lys-36' of histone H3 (H3K36me3) (in vitro).

The protein resides in the nucleus. In terms of biological role, involved in the DNA damage response pathway by contributing to the maintenance of chromatin architecture. Recruited to the vicinity of DNA breaks by TP53BP1 and plays an accessory role to facilitate damage-induced chromatin changes and promoting chromatin relaxation. Required for efficient DNA repair and cell survival following DNA damage. This chain is PWWP domain-containing DNA repair factor 3A, found in Rattus norvegicus (Rat).